Consider the following 701-residue polypeptide: Translation initiation factor IF-2 (701 aa).

Basic and acidic residues predominate over residues 48–62 (KIYKPEKAEQSEKSQ). Positions 48–123 (KIYKPEKAEQ…EPKEMPSKIT (76 aa)) are disordered. 2 stretches are compositionally biased toward low complexity: residues 63–89 (QKNT…NNKP) and 97–109 (NNKN…NNKQ). Basic and acidic residues predominate over residues 110–119 (PKQEEPKEMP). A tr-type G domain is found at 203 to 372 (ERPAVVTIMG…VLTSEVQELK (170 aa)). A G1 region spans residues 212 to 219 (GHVDHGKT). Residue 212 to 219 (GHVDHGKT) coordinates GTP. The interval 237 to 241 (GITQH) is G2. A G3 region spans residues 258–261 (DTPG). GTP-binding positions include 258–262 (DTPGH) and 312–315 (NKID). A G4 region spans residues 312-315 (NKID). Residues 348 to 350 (SAL) are G5.

The protein belongs to the TRAFAC class translation factor GTPase superfamily. Classic translation factor GTPase family. IF-2 subfamily.

The protein localises to the cytoplasm. Its function is as follows. One of the essential components for the initiation of protein synthesis. Protects formylmethionyl-tRNA from spontaneous hydrolysis and promotes its binding to the 30S ribosomal subunits. Also involved in the hydrolysis of GTP during the formation of the 70S ribosomal complex. In Staphylococcus saprophyticus subsp. saprophyticus (strain ATCC 15305 / DSM 20229 / NCIMB 8711 / NCTC 7292 / S-41), this protein is Translation initiation factor IF-2.